Consider the following 419-residue polypeptide: 26S proteasome regulatory subunit 8 homolog A (419 aa).

Ala-2 is modified (N-acetylalanine). 202-209 is a binding site for ATP; that stretch reads GPPGTGKT. Lys-406 participates in a covalent cross-link: Glycyl lysine isopeptide (Lys-Gly) (interchain with G-Cter in ubiquitin).

This sequence belongs to the AAA ATPase family. In terms of assembly, component of the 19S regulatory particle (RP/PA700) base subcomplex of the 26S proteasome. The 26S proteasome is composed of a core protease (CP), known as the 20S proteasome, capped at one or both ends by the 19S regulatory particle (RP/PA700). The RP/PA700 complex is composed of at least 17 different subunits in two subcomplexes, the base and the lid, which form the portions proximal and distal to the 20S proteolytic core, respectively.

The protein localises to the cytoplasm. It localises to the nucleus. Functionally, the 26S proteasome is involved in the ATP-dependent degradation of ubiquitinated proteins. The regulatory (or ATPase) complex confers ATP dependency and substrate specificity to the 26S complex. The chain is 26S proteasome regulatory subunit 8 homolog A (RPT6A) from Arabidopsis thaliana (Mouse-ear cress).